The sequence spans 271 residues: uncharacterized protein (271 aa).

3 consecutive transmembrane segments (helical) span residues 30–50, 189–209, and 218–238; these read IWFP…GMLL, ALAA…YFLI, and FLVT…IFAC.

Its subcellular location is the cell membrane. This is an uncharacterized protein from Aquifex aeolicus (strain VF5).